The chain runs to 468 residues: Beta-monoglucosyldiacylglycerol synthase (468 aa).

Transmembrane regions (helical) follow at residues 51 to 71 (AALVLTIVWSGTIALHLVSWG), 72 to 92 (SIFILGLTTVLGIHALGVVFA), 358 to 378 (MLMFMLTMYILPTAAIPDLLM), and 387 to 407 (MLGPVTGLSVTMSVVGMFAGL).

It belongs to the glycosyltransferase 2 family. Mg(2+) is required as a cofactor.

The protein localises to the membrane. It catalyses the reaction a 1,2-diacyl-sn-glycerol + UDP-alpha-D-glucose = a 1,2-diacyl-3-O-(beta-D-glucopyranosyl)-sn-glycerol + UDP + H(+). Functionally, glucosyltransferase involved in the biosynthesis of the non-bilayer-forming membrane lipid beta-monoglucosyldiacylglycerol which contributes to regulate the properties and stability of the membrane. Catalyzes the transfer of a glucosyl residue from UDP-Glc to diacylglycerol (DAG) acceptor to form the corresponding beta-glucosyl-DAG (1,2-diacyl-3-O-(beta-D-glucopyranosyl)-sn-glycerol). It can only use UDP-Glc as sugar donor. Two types of DAG (dipalmitoyl-DAG (DPDAG) and 1-oleoyl-2-palmitoyl-DAG (OPDAG)) can be used as sugar acceptors, but OPDAG is preferred. This chain is Beta-monoglucosyldiacylglycerol synthase, found in Nostoc sp. (strain PCC 7120 / SAG 25.82 / UTEX 2576).